The following is a 556-amino-acid chain: 2-succinyl-5-enolpyruvyl-6-hydroxy-3-cyclohexene-1-carboxylate synthase (556 aa).

This sequence belongs to the TPP enzyme family. MenD subfamily. As to quaternary structure, homodimer. It depends on Mg(2+) as a cofactor. The cofactor is Mn(2+). Thiamine diphosphate serves as cofactor.

The catalysed reaction is isochorismate + 2-oxoglutarate + H(+) = 5-enolpyruvoyl-6-hydroxy-2-succinyl-cyclohex-3-ene-1-carboxylate + CO2. The protein operates within quinol/quinone metabolism; 1,4-dihydroxy-2-naphthoate biosynthesis; 1,4-dihydroxy-2-naphthoate from chorismate: step 2/7. It participates in quinol/quinone metabolism; menaquinone biosynthesis. Its function is as follows. Catalyzes the thiamine diphosphate-dependent decarboxylation of 2-oxoglutarate and the subsequent addition of the resulting succinic semialdehyde-thiamine pyrophosphate anion to isochorismate to yield 2-succinyl-5-enolpyruvyl-6-hydroxy-3-cyclohexene-1-carboxylate (SEPHCHC). The protein is 2-succinyl-5-enolpyruvyl-6-hydroxy-3-cyclohexene-1-carboxylate synthase of Escherichia coli (strain SMS-3-5 / SECEC).